The primary structure comprises 401 residues: Cysteine desulfurase (401 aa).

Pyridoxal 5'-phosphate contacts are provided by residues 72–73, Asn151, Gln179, and 199–201; these read AT and SAH. Residue Lys202 is modified to N6-(pyridoxal phosphate)lysine. Thr237 contacts pyridoxal 5'-phosphate. The active-site Cysteine persulfide intermediate is the Cys324. Cys324 provides a ligand contact to [2Fe-2S] cluster.

The protein belongs to the class-V pyridoxal-phosphate-dependent aminotransferase family. NifS/IscS subfamily. As to quaternary structure, homodimer. Pyridoxal 5'-phosphate is required as a cofactor.

The catalysed reaction is (sulfur carrier)-H + L-cysteine = (sulfur carrier)-SH + L-alanine. Functionally, catalyzes the removal of elemental sulfur atoms from cysteine to produce alanine. Seems to participate in the biosynthesis of the nitrogenase metalloclusters by providing the inorganic sulfur required for the Fe-S core formation. This chain is Cysteine desulfurase, found in Enterobacter agglomerans (Erwinia herbicola).